The primary structure comprises 434 residues: Trigger factor (434 aa).

The PPIase FKBP-type domain occupies 160–245 (GDKVKMNFVG…LTEVQAANLP (86 aa)).

This sequence belongs to the FKBP-type PPIase family. Tig subfamily.

It localises to the cytoplasm. The catalysed reaction is [protein]-peptidylproline (omega=180) = [protein]-peptidylproline (omega=0). Its function is as follows. Involved in protein export. Acts as a chaperone by maintaining the newly synthesized protein in an open conformation. Functions as a peptidyl-prolyl cis-trans isomerase. This is Trigger factor from Shewanella putrefaciens (strain CN-32 / ATCC BAA-453).